The sequence spans 235 residues: uncharacterized protein (235 aa).

The region spanning 82 to 221 is the N-acetyltransferase domain; that stretch reads LAFKKFPPDP…DTGELIRESP (140 aa).

The protein belongs to the acetyltransferase family.

Its subcellular location is the golgi apparatus membrane. The protein localises to the endoplasmic reticulum membrane. This is an uncharacterized protein from Schizosaccharomyces pombe (strain 972 / ATCC 24843) (Fission yeast).